A 365-amino-acid polypeptide reads, in one-letter code: Ribosomal RNA large subunit methyltransferase M (365 aa).

S-adenosyl-L-methionine contacts are provided by residues Ser193, Cys226–Gly229, Asp245, Asp265, and Asp282. The active-site Proton acceptor is Lys311.

This sequence belongs to the class I-like SAM-binding methyltransferase superfamily. RNA methyltransferase RlmE family. RlmM subfamily. Monomer.

The protein localises to the cytoplasm. The enzyme catalyses cytidine(2498) in 23S rRNA + S-adenosyl-L-methionine = 2'-O-methylcytidine(2498) in 23S rRNA + S-adenosyl-L-homocysteine + H(+). In terms of biological role, catalyzes the 2'-O-methylation at nucleotide C2498 in 23S rRNA. This chain is Ribosomal RNA large subunit methyltransferase M, found in Alteromonas mediterranea (strain DSM 17117 / CIP 110805 / LMG 28347 / Deep ecotype).